The chain runs to 594 residues: Neuronal PAS domain-containing protein 1 (594 aa).

The region spanning 45 to 98 is the bHLH domain; it reads QRKEKSRNAARWRRGKENLEFFELAKLLPLPGAISSQLDKASIVRLSVTYLRLR. Residues 135-205 form the PAS 1 domain; the sequence is EQHLGGHILQ…EQLGLRAASI (71 aa). The disordered stretch occupies residues 206–237; it reads GPPTPPSVSSSSSSSSSSLVDTPEIEASPTEA. The segment covering 212 to 223 has biased composition (low complexity); sequence SVSSSSSSSSSS. The 67-residue stretch at 294 to 360 folds into the PAS 2 domain; it reads APLAELPLHG…IRQSHLDLLD (67 aa). The 44-residue stretch at 366-409 folds into the PAC domain; sequence TGYYRWLQRAGGFVWLQSVATVAGNGKSTGEHHVLWVSHVLSNA. Positions 427–498 are disordered; the sequence is QEEPSRPGPE…DPPAPPRPEF (72 aa). Basic and acidic residues predominate over residues 453–480; that stretch reads DQDKDKDPQARGKRIKVEASPKEARGSE.

Efficient DNA binding requires dimerization with another bHLH protein. Interacts with ARNT; forms a heterodimer that binds core DNA sequence 5'-[AG]CGTG-3' within the hypoxia response element (HRE) leading to a transcriptional repressor on its target gene TH. As to expression, expressed in brain in inhibitory interneurons. Also found in spinal cord.

The protein localises to the nucleus. Its function is as follows. May control regulatory pathways relevant to schizophrenia and to psychotic illness. May play a role in late central nervous system development by modulating EPO expression in response to cellular oxygen level. Forms a heterodimer that binds core DNA sequence 5'-TACGTG-3' within the hypoxia response element (HRE) leading to transcriptional repression on its target gene TH. The polypeptide is Neuronal PAS domain-containing protein 1 (Npas1) (Mus musculus (Mouse)).